Reading from the N-terminus, the 239-residue chain is tRNA (guanine-N(1)-)-methyltransferase (239 aa).

S-adenosyl-L-methionine-binding positions include glycine 113 and 137–142; that span reads LGDYVL.

The protein belongs to the RNA methyltransferase TrmD family. As to quaternary structure, homodimer.

It localises to the cytoplasm. It catalyses the reaction guanosine(37) in tRNA + S-adenosyl-L-methionine = N(1)-methylguanosine(37) in tRNA + S-adenosyl-L-homocysteine + H(+). Functionally, specifically methylates guanosine-37 in various tRNAs. This chain is tRNA (guanine-N(1)-)-methyltransferase, found in Cutibacterium acnes (strain DSM 16379 / KPA171202) (Propionibacterium acnes).